A 431-amino-acid polypeptide reads, in one-letter code: Probable carboxylic ester hydrolase LipM (431 aa).

Helical transmembrane passes span 7-27 (IHVIRQIGALVVAAVTAAATI), 38-58 (FASLWSWFIGLVVTEFPLPTL), and 75-95 (PVRAVSWLVAAFSALGLLNLS). Residues serine 261, aspartate 357, and histidine 390 contribute to the active site.

This sequence belongs to the 'GDXG' lipolytic enzyme family.

It localises to the membrane. The sequence is that of Probable carboxylic ester hydrolase LipM from Mycobacterium tuberculosis (strain ATCC 25618 / H37Rv).